A 274-amino-acid polypeptide reads, in one-letter code: HMP-PP phosphatase (274 aa).

The Nucleophile role is filled by Asp8. 3 residues coordinate Mg(2+): Asp8, Asp10, and Asp213.

The protein belongs to the HAD-like hydrolase superfamily. Cof family. The cofactor is Mg(2+).

It catalyses the reaction 4-amino-2-methyl-5-(diphosphooxymethyl)pyrimidine + H2O = 4-amino-2-methyl-5-(phosphooxymethyl)pyrimidine + phosphate + H(+). Its function is as follows. Catalyzes the hydrolysis of 4-amino-2-methyl-5-hydroxymethylpyrimidine pyrophosphate (HMP-PP) to 4-amino-2-methyl-5-hydroxymethylpyrimidine phosphate (HMP-P). This is HMP-PP phosphatase from Serratia proteamaculans (strain 568).